Reading from the N-terminus, the 639-residue chain is Tubulin--tyrosine ligase-like protein 12 (639 aa).

The TTL domain occupies 295–639; that stretch reads PQGHVFRVHC…TDNCHVTRII (345 aa). ATP-binding positions include 445 to 448, K463, and D465; that span reads SKYI.

Belongs to the tubulin--tyrosine ligase family. In terms of assembly, interacts with MAVS; the interaction prevents MAVS binding to TBK1 and IKBKE. Interacts (via N-terminus) with TBK1 (via protein kinase domain). Interacts (via TTL domain) with IKBKE (via protein kinase domain). Interacts with tubulin alpha. Interacts with histone H3 and histone H4 (when trimethylated at 'Lys-20' (H4K20me3)). Interacts with CBX3. Widely expressed with highest levels in brain, kidney, liver, lung, muscle and testis.

The protein resides in the cytoplasm. It is found in the midbody. Its subcellular location is the cytoskeleton. It localises to the microtubule organizing center. The protein localises to the centrosome. The protein resides in the spindle. It is found in the nucleus. Negatively regulates post-translational modifications of tubulin, including detyrosination of the C-terminus and polyglutamylation of glutamate residues. Also, indirectly promotes histone H4 trimethylation at 'Lys-20' (H4K20me3). Probably by controlling tubulin and/or histone H4 post-translational modifications, plays a role in mitosis and in maintaining chromosome number stability. During RNA virus-mediated infection, acts as a negative regulator of the RIG-I pathway by preventing MAVS binding to TBK1 and IKBKE. This Mus musculus (Mouse) protein is Tubulin--tyrosine ligase-like protein 12.